We begin with the raw amino-acid sequence, 447 residues long: N-succinylarginine dihydrolase (447 aa).

Substrate contacts are provided by residues 19–28 (AGLSFGNEAS), Asn-110, and 137–138 (HR). Glu-174 is a catalytic residue. Arg-212 contacts substrate. Residue His-248 is part of the active site. Asp-250 and Asn-359 together coordinate substrate. The active-site Nucleophile is Cys-365.

The protein belongs to the succinylarginine dihydrolase family. Homodimer.

The enzyme catalyses N(2)-succinyl-L-arginine + 2 H2O + 2 H(+) = N(2)-succinyl-L-ornithine + 2 NH4(+) + CO2. Its pathway is amino-acid degradation; L-arginine degradation via AST pathway; L-glutamate and succinate from L-arginine: step 2/5. In terms of biological role, catalyzes the hydrolysis of N(2)-succinylarginine into N(2)-succinylornithine, ammonia and CO(2). This chain is N-succinylarginine dihydrolase, found in Escherichia coli O8 (strain IAI1).